A 497-amino-acid polypeptide reads, in one-letter code: Di-/tripeptide transporter (497 aa).

Topologically, residues 1–36 are cytoplasmic; it reads MQNLNKTEKTFFGQPRGLLTLFQTEFWERFSYYGMR. The helical transmembrane segment at 37–55 threads the bilayer; the sequence is AILVYYLYALTTADNAGLG. The Extracellular segment spans residues 56 to 64; that stretch reads LPKAQAMAI. Residues 65-83 traverse the membrane as a helical segment; it reads VSIYGALVYLSTIVGGWVA. Residues 84-92 lie on the Cytoplasmic side of the membrane; it reads DRLLGASRT. A helical transmembrane segment spans residues 93–111; it reads IFLGGILITLGHVALATPF. Residues 112–115 lie on the Extracellular side of the membrane; it reads GLSS. The chain crosses the membrane as a helical span at residues 116 to 134; that stretch reads LFVALFLIILGTGMLKPNI. Topologically, residues 135 to 154 are cytoplasmic; that stretch reads SNMVGHLYSKDDSRRDTGFN. Residues 155-173 form a helical membrane-spanning segment; the sequence is IFVVGINMGSLIAPLIVGT. The Extracellular segment spans residues 174–181; the sequence is VGQGVNYH. Residues 182 to 200 form a helical membrane-spanning segment; it reads LGFSLAAIGMIFALFAYWY. Residues 201-224 are Cytoplasmic-facing; the sequence is GRLRHFPEIGREPSNPMDAKAKRN. Residues 225-243 traverse the membrane as a helical segment; sequence FIITLTIVLIVALIGFFLI. Over 244 to 254 the chain is Extracellular; that stretch reads YQASPANFINN. The chain crosses the membrane as a helical span at residues 255–273; it reads FINVLSIIGIVVPIIYFVM. At 274 to 293 the chain is on the cytoplasmic side; it reads MFTSKKVESDERRKLTAYIP. The helical transmembrane segment at 294–312 threads the bilayer; the sequence is LFLSAIVFWAIEEQSSTII. The Extracellular portion of the chain corresponds to 313–335; that stretch reads AVWGESRSNLNPTWFGFTFHIDP. Residues 336-354 traverse the membrane as a helical segment; that stretch reads SWYQLLNPLFIVLLSPIFV. Residues 355–372 are Cytoplasmic-facing; that stretch reads RIWNKLGDRQPSTIVKFG. The chain crosses the membrane as a helical span at residues 373 to 391; that stretch reads LGLMLTGASYLIMTLPGLL. Over 392 to 425 the chain is Extracellular; sequence NGTSGRASALWLVLMFAVQMAGELLVSPVGLSVS. A helical transmembrane segment spans residues 426–444; sequence TKLAPVAFQSQMMAMWFLA. Residues 445–497 are Cytoplasmic-facing; that stretch reads DSTSQAINAQITPIFKAATEVHFFAITGIIGIIVGIILLIIKKPILKLMGDVR.

This sequence belongs to the major facilitator superfamily. Proton-dependent oligopeptide transporter (POT/PTR) (TC 2.A.17) family.

Its subcellular location is the cell membrane. Its function is as follows. Proton-dependent uptake of di- or tri-peptides. The protein is Di-/tripeptide transporter (dtpT) of Lactococcus lactis subsp. cremoris (Streptococcus cremoris).